Consider the following 130-residue polypeptide: Mating-type-like protein A1 (130 aa).

Positions 68 to 127 (TYTTRKPLPAKAKLQLVETFSKKRYLTRCEKHQLAVQCGITTNQVQIWFANRRKRSKDLN) form a DNA-binding region, homeobox.

This sequence belongs to the MATA1 family.

The protein localises to the nucleus. In terms of biological role, mating type proteins are sequence specific DNA-binding proteins that act as master switches in yeast differentiation by controlling gene expression in a cell type-specific fashion. In Candida glabrata (strain ATCC 2001 / BCRC 20586 / JCM 3761 / NBRC 0622 / NRRL Y-65 / CBS 138) (Yeast), this protein is Mating-type-like protein A1 (MTL1A1).